The primary structure comprises 661 residues: UvrABC system protein B (661 aa).

One can recognise a Helicase ATP-binding domain in the interval 25–182; the sequence is AGLSSKKRSQ…NDLINLQYER (158 aa). Residue 38–45 coordinates ATP; that stretch reads GITGSGKT. The Beta-hairpin motif lies at 91–114; it reads YYDYYQPEAYIARTDTFIEKDSSI. A Helicase C-terminal domain is found at 430–592; the sequence is QVEDLISEIQ…IIPKTINRAI (163 aa). A UVR domain is found at 621 to 656; sequence KTHIDKLKKEMLKAASNLEFEQAVKLRDQLKTLEAA.

This sequence belongs to the UvrB family. As to quaternary structure, forms a heterotetramer with UvrA during the search for lesions. Interacts with UvrC in an incision complex.

The protein localises to the cytoplasm. Its function is as follows. The UvrABC repair system catalyzes the recognition and processing of DNA lesions. A damage recognition complex composed of 2 UvrA and 2 UvrB subunits scans DNA for abnormalities. Upon binding of the UvrA(2)B(2) complex to a putative damaged site, the DNA wraps around one UvrB monomer. DNA wrap is dependent on ATP binding by UvrB and probably causes local melting of the DNA helix, facilitating insertion of UvrB beta-hairpin between the DNA strands. Then UvrB probes one DNA strand for the presence of a lesion. If a lesion is found the UvrA subunits dissociate and the UvrB-DNA preincision complex is formed. This complex is subsequently bound by UvrC and the second UvrB is released. If no lesion is found, the DNA wraps around the other UvrB subunit that will check the other stand for damage. The sequence is that of UvrABC system protein B from Rickettsia peacockii (strain Rustic).